The following is a 298-amino-acid chain: 2-dehydropantoate 2-reductase (298 aa).

Residues 7-12, asparagine 98, and alanine 124 contribute to the NADP(+) site; that span reads GGGSVG. Asparagine 98 is a substrate binding site. Lysine 179 (proton donor) is an active-site residue. 4 residues coordinate substrate: asparagine 183, asparagine 187, asparagine 197, and serine 246. Glutamate 258 lines the NADP(+) pocket.

This sequence belongs to the ketopantoate reductase family.

The protein localises to the cytoplasm. It carries out the reaction (R)-pantoate + NADP(+) = 2-dehydropantoate + NADPH + H(+). Its pathway is cofactor biosynthesis; (R)-pantothenate biosynthesis; (R)-pantoate from 3-methyl-2-oxobutanoate: step 2/2. Its function is as follows. Catalyzes the NADPH-dependent reduction of ketopantoate into pantoic acid. The chain is 2-dehydropantoate 2-reductase (panE) from Bacillus subtilis (strain 168).